The sequence spans 177 residues: uncharacterized protein (177 aa).

The tract at residues 122–177 is disordered; the sequence is LPFTRNGSGQQSNKLRDPKKGRTHKPKPSEKHKKNKTGKKGAQEKTHRSRSSRKGN. Basic residues-rich tracts occupy residues 142–160 and 168–177; these read GRTHKPKPSEKHKKNKTGK and HRSRSSRKGN.

This is an uncharacterized protein from Saccharomyces cerevisiae (strain ATCC 204508 / S288c) (Baker's yeast).